Here is a 324-residue protein sequence, read N- to C-terminus: N-acetyl-gamma-glutamyl-phosphate reductase (324 aa).

Residue Cys131 is part of the active site.

It belongs to the NAGSA dehydrogenase family. Type 1 subfamily.

Its subcellular location is the cytoplasm. The enzyme catalyses N-acetyl-L-glutamate 5-semialdehyde + phosphate + NADP(+) = N-acetyl-L-glutamyl 5-phosphate + NADPH + H(+). It participates in amino-acid biosynthesis; L-arginine biosynthesis; N(2)-acetyl-L-ornithine from L-glutamate: step 3/4. Functionally, catalyzes the NADPH-dependent reduction of N-acetyl-5-glutamyl phosphate to yield N-acetyl-L-glutamate 5-semialdehyde. The chain is N-acetyl-gamma-glutamyl-phosphate reductase from Bradyrhizobium sp. (strain BTAi1 / ATCC BAA-1182).